A 223-amino-acid chain; its full sequence is Killer cell lectin-like receptor subfamily B member 1B allele B (223 aa).

Over methionine 1–lysine 43 the chain is Cytoplasmic. Positions leucine 6–leucine 11 match the ITIM motif motif. The LCK-binding motif signature appears at cysteine 32 to proline 35. Residues phenylalanine 44 to leucine 64 traverse the membrane as a helical; Signal-anchor for type II membrane protein segment. At serine 65–serine 223 the chain is on the extracellular side. Residues histidine 101–glutamine 211 enclose the C-type lectin domain. Intrachain disulfides connect cysteine 122–cysteine 210 and cysteine 189–cysteine 202.

As to quaternary structure, homodimer; disulfide-linked. Interacts with tyrosine kinase LCK. Binds PTPN6/SHP-1 in a phosphorylation-dependent manner. As to expression, expressed in NK cells and a subset of T-cells.

The protein localises to the membrane. Its function is as follows. Receptor for CLEC2D/OCIL. Ligand-binding contributes to inhibition of cytotoxic natural killer (NK) cells. May mediate MHC class I-independent 'missing-self' recognition of allografts, tumor cells and virus-infected cells. This Mus musculus (Mouse) protein is Killer cell lectin-like receptor subfamily B member 1B allele B (Klrb1b).